We begin with the raw amino-acid sequence, 136 residues long: Histone H3.1/H3.2 (136 aa).

The disordered stretch occupies residues 1 to 43 (MARTKQTARKSTGGKAPRKQLASKAARKSAPSTGGVKKPHRYK). Lys5 bears the N6,N6,N6-trimethyllysine; alternate mark. Residue Lys5 is modified to N6,N6-dimethyllysine; alternate. N6-methyllysine; alternate occurs at positions 5 and 10. Lys10 is subject to N6-acetyllysine; alternate. Ser11 carries the phosphoserine modification. Residue Lys15 is modified to N6,N6-dimethyllysine; alternate. An N6-acetyllysine; alternate mark is found at Lys15, Lys19, Lys24, Lys28, and Lys37. Lys19, Lys24, Lys28, and Lys37 each carry N6-methyllysine; alternate. N6,N6,N6-trimethyllysine; alternate is present on residues Lys28 and Lys37. N6,N6-dimethyllysine; alternate is present on residues Lys28 and Lys37. Lys57 and Lys65 each carry N6-acetyllysine. Lys80 bears the N6,N6,N6-trimethyllysine; alternate mark. Lys80 is modified (N6,N6-dimethyllysine; alternate). Residue Lys80 is modified to N6-methyllysine; alternate.

It belongs to the histone H3 family. The nucleosome is a histone octamer containing two molecules each of H2A, H2B, H3 and H4 assembled in one H3-H4 heterotetramer and two H2A-H2B heterodimers. The octamer wraps approximately 147 bp of DNA. Phosphorylated to form H3S10ph. H3S10ph promotes subsequent H3K14ac formation and is required for transcriptional activation through TBP recruitment to the promoters. Post-translationally, mono-, di- and trimethylated by the COMPASS complex to form H3K4me1/2/3. H3K4me activates gene expression by regulating transcription elongation and plays a role in telomere length maintenance. H3K4me enrichment correlates with transcription levels, and occurs in a 5' to 3' gradient with H3K4me3 enrichment at the 5'-end of genes, shifting to H3K4me2 and then H3K4me1. Methylated by SET2 to form H3K36me. H3K36me represses gene expression. Methylated by DOT1 to form H3K79me. H3K79me is required for association of SIR proteins with telomeric regions and for telomeric silencing. The COMPASS-mediated formation of H3K4me2/3 and the DOT1-mediated formation of H3K79me require H2BK123ub1. In terms of processing, acetylation of histone H3 leads to transcriptional activation. H3K14ac formation by GCN5 is promoted by H3S10ph. H3K14ac can also be formed by ESA1. H3K56ac formation occurs predominantly in newly synthesized H3 molecules during G1, S and G2/M of the cell cycle and may be involved in DNA repair.

It is found in the nucleus. The protein localises to the chromosome. Core component of nucleosome. Nucleosomes wrap and compact DNA into chromatin, limiting DNA accessibility to the cellular machineries which require DNA as a template. Histones thereby play a central role in transcription regulation, DNA repair, DNA replication and chromosomal stability. DNA accessibility is regulated via a complex set of post-translational modifications of histones, also called histone code, and nucleosome remodeling. The polypeptide is Histone H3.1/H3.2 (HHT1) (Lodderomyces elongisporus (strain ATCC 11503 / CBS 2605 / JCM 1781 / NBRC 1676 / NRRL YB-4239) (Yeast)).